The following is a 298-amino-acid chain: Serine/threonine-protein kinase 1 (298 aa).

The Protein kinase domain maps to 38–276 (FIATRPMFEG…FKSLVSHPWF (239 aa)). Residues 45–53 (FEGGRNNVF) and Lys-65 contribute to the ATP site. Asp-152 (proton acceptor) is an active-site residue.

It belongs to the protein kinase superfamily. Ser/Thr protein kinase family.

It localises to the virion. The protein localises to the host cytoplasm. The catalysed reaction is L-seryl-[protein] + ATP = O-phospho-L-seryl-[protein] + ADP + H(+). It carries out the reaction L-threonyl-[protein] + ATP = O-phospho-L-threonyl-[protein] + ADP + H(+). Its function is as follows. Essential for viral replication. It may mediate the virus progression through DNA replication. The chain is Serine/threonine-protein kinase 1 from African swine fever virus (strain Badajoz 1971 Vero-adapted) (Ba71V).